Reading from the N-terminus, the 188-residue chain is Shikimate kinase (188 aa).

Position 21–26 (21–26) interacts with ATP; it reads GAGKTT. Thr-25 lines the Mg(2+) pocket. Positions 43, 67, and 90 each coordinate substrate. Arg-130 lines the ATP pocket. Residue Arg-148 participates in substrate binding.

It belongs to the shikimate kinase family. Monomer. Requires Mg(2+) as cofactor.

The protein resides in the cytoplasm. It carries out the reaction shikimate + ATP = 3-phosphoshikimate + ADP + H(+). Its pathway is metabolic intermediate biosynthesis; chorismate biosynthesis; chorismate from D-erythrose 4-phosphate and phosphoenolpyruvate: step 5/7. Catalyzes the specific phosphorylation of the 3-hydroxyl group of shikimic acid using ATP as a cosubstrate. The chain is Shikimate kinase from Geobacillus kaustophilus (strain HTA426).